The chain runs to 656 residues: Vacuolar amino acid transporter 3 (656 aa).

Residues 1–109 (MSNSQSIKIK…VPSTSEDPDV (109 aa)) are disordered. Polar residues predominate over residues 15–28 (NENFASGSYSSRRS). Phosphoserine is present on residues serine 37 and serine 53. Polar residues predominate over residues 50–71 (ISPSESNLPNNVAENTTDTPVN). Residues 75–97 (IRDENHNSRKGKDVTLNSDEAHS) show a composition bias toward basic and acidic residues. Phosphoserine is present on serine 172. The next 11 helical transmembrane spans lie at 280–300 (AVLL…PKAF), 307–327 (FSSA…LLLI), 351–371 (FAIL…YISF), 389–409 (EYHL…LSLV), 419–439 (ALIA…WDVI), 457–477 (FSLF…ILPI), 494–514 (VMAA…AAFG), 537–557 (LYAI…IAII), 578–598 (YLRV…SSRL), 601–621 (FVSM…PPML), and 636–656 (DIFM…MTFF).

This sequence belongs to the amino acid/polyamine transporter 2 family.

The protein resides in the endoplasmic reticulum membrane. It is found in the vacuole membrane. In terms of biological role, involved in amino acid efflux from the vacuole to the cytoplasm. Capable of transporting large neutral amino acids including tyrosine, glutamine, asparagine, isoleucine and leucine. Required for spore formation. This chain is Vacuolar amino acid transporter 3 (avt3), found in Schizosaccharomyces pombe (strain 972 / ATCC 24843) (Fission yeast).